The sequence spans 30 residues: Cyclotide cycloviolacin O17 (30 aa).

Residues 1-30 (GIPCGESCVWIPCISAAIGCSCKNKVCYRN) constitute a cross-link (cyclopeptide (Gly-Asn)). Cystine bridges form between Cys4-Cys20, Cys8-Cys22, and Cys13-Cys27.

This is a cyclic peptide.

In terms of biological role, probably participates in a plant defense mechanism. This chain is Cyclotide cycloviolacin O17, found in Psychotria brachyceras.